A 705-amino-acid chain; its full sequence is Phosphoribosylformylglycinamidine synthase subunit PurL (705 aa).

Residue His-32 is part of the active site. Tyr-35 lines the ATP pocket. Residue Glu-76 participates in Mg(2+) binding. Substrate is bound by residues 77-80 (SHNH) and Arg-99. His-78 serves as the catalytic Proton acceptor. Position 100 (Asp-100) interacts with Mg(2+). Gln-224 is a binding site for substrate. Asp-252 lines the Mg(2+) pocket. 296–298 (ESQ) lines the substrate pocket. Asp-471 and Gly-508 together coordinate ATP. Asn-509 provides a ligand contact to Mg(2+). Substrate is bound at residue Ser-511.

Belongs to the FGAMS family. In terms of assembly, monomer. Part of the FGAM synthase complex composed of 1 PurL, 1 PurQ and 2 PurS subunits.

The protein localises to the cytoplasm. The catalysed reaction is N(2)-formyl-N(1)-(5-phospho-beta-D-ribosyl)glycinamide + L-glutamine + ATP + H2O = 2-formamido-N(1)-(5-O-phospho-beta-D-ribosyl)acetamidine + L-glutamate + ADP + phosphate + H(+). Its pathway is purine metabolism; IMP biosynthesis via de novo pathway; 5-amino-1-(5-phospho-D-ribosyl)imidazole from N(2)-formyl-N(1)-(5-phospho-D-ribosyl)glycinamide: step 1/2. Part of the phosphoribosylformylglycinamidine synthase complex involved in the purines biosynthetic pathway. Catalyzes the ATP-dependent conversion of formylglycinamide ribonucleotide (FGAR) and glutamine to yield formylglycinamidine ribonucleotide (FGAM) and glutamate. The FGAM synthase complex is composed of three subunits. PurQ produces an ammonia molecule by converting glutamine to glutamate. PurL transfers the ammonia molecule to FGAR to form FGAM in an ATP-dependent manner. PurS interacts with PurQ and PurL and is thought to assist in the transfer of the ammonia molecule from PurQ to PurL. This Pyrococcus abyssi (strain GE5 / Orsay) protein is Phosphoribosylformylglycinamidine synthase subunit PurL.